The primary structure comprises 735 residues: Protein-associating with the carboxyl-terminal domain of ezrin (735 aa).

A lipid anchor (N-myristoyl glycine) is attached at Gly2. One can recognise a Protein kinase domain in the interval 2–245 (GSENSALKSY…LSTLLSHDFF (244 aa)). HEAT repeat units follow at residues 194-249 (FGAL…RNDF), 285-323 (LIASRLVPLLLNQLVFAEPVAVKSFLPYLLGPKKENAPG), 333-370 (LFQSRVIPVLLRLFEVHEEHVRMVLLSHIEAYVEHFTQ), and 372-409 (QLKKVILPQVLLGLRDTSNSIVAITLRSLAVLVSLLGP). Ser439 is subject to Phosphoserine. 2 disordered regions span residues 505-545 (LSDV…ASIH) and 604-648 (VPLT…GLGL). Positions 528–538 (WPDWSEPEEPE) are enriched in acidic residues. The segment at 547–735 (WPREPCDVAE…EELAWEDNNW (189 aa)) is interaction with EZR. Ser701 carries the phosphoserine modification.

It belongs to the protein kinase superfamily. Interacts with EZR/VIL2 C-terminal domain. In terms of processing, may be myristoylated; myristoylation may target it to Golgi compartment.

It is found in the cytoplasm. The protein localises to the golgi apparatus. Its subcellular location is the cell projection. The protein resides in the lamellipodium. Its function is as follows. May play a role in regulating cell adhesion/migration complexes in migrating cells. The protein is Protein-associating with the carboxyl-terminal domain of ezrin (Scyl3) of Mus musculus (Mouse).